A 378-amino-acid polypeptide reads, in one-letter code: Rhodopsin (378 aa).

The Extracellular portion of the chain corresponds to 1 to 53 (MMSIASGPSHAAYTWASQGGGFGNQTVVDKVPPEMLHMVDAHWYQFPPMNPLW). Residue asparagine 24 is glycosylated (N-linked (GlcNAc...) asparagine). Residues 54 to 78 (HALLGFVIGVLGVISVIGNGMVIYI) traverse the membrane as a helical segment. At 79-90 (FTTTKSLRTPSN) the chain is on the cytoplasmic side. Residues 91–115 (LLVVNLAISDFLMMLCMSPAMVINC) form a helical membrane-spanning segment. Over 116–130 (YYETWVLGPLFCELY) the chain is Extracellular. Cysteine 127 and cysteine 204 are disulfide-bonded. Residues 131–150 (GLAGSLFGCASIWTMTMIAF) traverse the membrane as a helical segment. Residues 151–169 (DRYNVIVKGLSAKPMTING) lie on the Cytoplasmic side of the membrane. A helical membrane pass occupies residues 170-193 (ALIRILTIWFFTLAWTIAPMFGWN). Over 194–217 (RYVPEGNMTACGTDYLTKDLFSRS) the chain is Extracellular. Asparagine 200 is a glycosylation site (N-linked (GlcNAc...) asparagine). A helical transmembrane segment spans residues 218-245 (YILIYSIFVYFTPLFLIIYSYFFIIQAV). The Cytoplasmic segment spans residues 246–280 (AAHEKNMREQAKKMNVASLRSAENQSTSAECKLAK). Residues 281–304 (VALMTISLWFMAWTPYLVINYSGI) form a helical membrane-spanning segment. Topologically, residues 305–311 (FETTKIS) are extracellular. A helical transmembrane segment spans residues 312–336 (PLFTIWGSLFAKANAVYNPIVYGIS). Residue lysine 323 is modified to N6-(retinylidene)lysine. At 337-378 (HPKYRAALFQKFPSLACTTEPTGADTMSTTTTVTEGNEKPAA) the chain is on the cytoplasmic side.

The protein belongs to the G-protein coupled receptor 1 family. Opsin subfamily. In terms of processing, phosphorylated on some or all of the serine and threonine residues present in the C-terminal region.

The protein localises to the membrane. Visual pigments are the light-absorbing molecules that mediate vision. They consist of an apoprotein, opsin, covalently linked to cis-retinal. In Camponotus atriceps (Florida carpenter ant), this protein is Rhodopsin.